A 243-amino-acid chain; its full sequence is Collagen triple helix repeat-containing protein 1 (243 aa).

Residues 1-30 form the signal peptide; that stretch reads MRPQGPAASPQRLRGLLLLLLLQLPAPSSA. The Collagen-like domain maps to 57–90; the sequence is QGPAGVPGRDGSPGANGIPGTPGIPGRDGFKGEK. Positions 62–85 are disordered; the sequence is VPGRDGSPGANGIPGTPGIPGRDG. The N-linked (GlcNAc...) asparagine glycan is linked to asparagine 186.

In terms of processing, N-glycosylated. As to expression, isoform 1 is expressed in calcified atherosclerotic plaque and chondrocyte-like cells.

Its subcellular location is the secreted. It localises to the extracellular space. The protein resides in the extracellular matrix. In terms of biological role, may act as a negative regulator of collagen matrix deposition. In Homo sapiens (Human), this protein is Collagen triple helix repeat-containing protein 1 (CTHRC1).